The chain runs to 259 residues: Histidinol-phosphatase (259 aa).

Residues Glu66, Asp82, Ile84, Asp85, and Asp207 each coordinate Mg(2+). Glu66 contributes to the substrate binding site. Substrate contacts are provided by residues Ile84–Thr87 and Asp207.

Belongs to the inositol monophosphatase superfamily. Mg(2+) serves as cofactor.

It catalyses the reaction L-histidinol phosphate + H2O = L-histidinol + phosphate. It functions in the pathway amino-acid biosynthesis; L-histidine biosynthesis; L-histidine from 5-phospho-alpha-D-ribose 1-diphosphate: step 8/9. Catalyzes the dephosphorylation of histidinol-phosphate to histidinol, the direct precursor of histidine. The sequence is that of Histidinol-phosphatase (hisN) from Chlorobaculum parvum (strain DSM 263 / NCIMB 8327) (Chlorobium vibrioforme subsp. thiosulfatophilum).